The following is a 349-amino-acid chain: Peroxisomal acyl-coenzyme A thioester hydrolase 1 (349 aa).

Residues D259, S282, and Q333 each act as charge relay system in the active site. The short motif at 347–349 (AKF) is the Microbody targeting signal element.

Belongs to the C/M/P thioester hydrolase family.

The protein resides in the peroxisome. It catalyses the reaction hexadecanoyl-CoA + H2O = hexadecanoate + CoA + H(+). Functionally, acyl-coenzyme A (acyl-CoA) thioesterases are a group of enzymes that catalyze the hydrolysis of acyl-CoAs to the free fatty acid and coenzyme A (CoASH), providing the potential to regulate intracellular levels of acyl-CoAs, free fatty acids and CoASH. Contributes to growth on fatty acids. This Saccharomyces cerevisiae (strain ATCC 204508 / S288c) (Baker's yeast) protein is Peroxisomal acyl-coenzyme A thioester hydrolase 1 (TES1).